A 313-amino-acid chain; its full sequence is Protein OPG185 (313 aa).

The first 16 residues, 1-16 (MTQLPILLLLISLVYA), serve as a signal peptide directing secretion. The Virion surface segment spans residues 17 to 274 (TPSPQTSKKI…TSISNYKTKD (258 aa)). Residues N37, N69, N112, N159, N194, and N252 are each glycosylated (N-linked (GlcNAc...) asparagine; by host). Residues 275–295 (FVEIFGITTLIILSAVAIFCI) traverse the membrane as a helical segment. The Intravirion segment spans residues 296 to 313 (TYYICNKHPRKYKTENKV).

It belongs to the orthopoxvirus OPG185 family. In terms of assembly, heterodimerizes with OPG040. The heterodimer OPG185-OPG040 interacts with components of the entry fusion complex OPG143 and OPG094. Heterodimer with C3/VPC protein; disulfide-linked. Glycosylated; contains phosphate and sulfate-substituted glycans. O-glycosylation is required for hemagglutination and hemadsorption activities of infected cell membranes.

It localises to the virion membrane. The protein resides in the host membrane. In terms of biological role, prevents cell to cell fusion by interacting with and directing the viral OPG040 protein on the host plasma membrane. The OPG185-OPG040 complex associates with components of the entry fusion complex (EFC) presumably to avoid superinfection and syncytium formation. Via its interaction with C3/VCP protein, protects the infected cell and probably also the extracellular enveloped virus from complement attack. This Monkeypox virus protein is Protein OPG185 (OPG185).